We begin with the raw amino-acid sequence, 230 residues long: MADLKITWLGHAAFLLESEKKLLIDPFISENPKSPCSPEDLNPDIIAVTHGHRDHLGDTIEIGARTGCRIISIHEVANYIKSKGVFAEGMNKGGTVEVEGIALTMTHALHSSSIDASGFSFDGGSPAGFVINIGGYSVYHSGDTGVFGDMQLIGELYKPEIALLPIGSRFTMGIKEAVKAVELIEPRIVVPMHYNTFDVIRQDPEEFRKAVEAKVDTKVIIMSPGESIQL.

The protein belongs to the UPF0173 family.

The chain is UPF0173 metal-dependent hydrolase MM_2300 from Methanosarcina mazei (strain ATCC BAA-159 / DSM 3647 / Goe1 / Go1 / JCM 11833 / OCM 88) (Methanosarcina frisia).